Here is a 245-residue protein sequence, read N- to C-terminus: MGRLDGKVIVLSAAAQGIGKASAIAFAKEGAQVTATDINGEKLKELDGIPGIKTKVVDVTKKDQVDALAKDFDHVDVLFNIAGFVHHGSILDCEESDWDFTMNVNVRSMYLMIKAFLPKMLARKSGNIINMASVASSIKGVVNRCVYSTSKAAVIGLTKSVAADFLEQGIRCNCICPGTVDTPSLRERIQARPDPEQAFKDFMARQRTGRLCTAEEVAHLCVYLASDESTFVTGTEVIIDGGWRL.

NAD(+) is bound by residues Gln16–Ile18, Asp37, and Asp58. Residue Arg144 participates in substrate binding. The active-site Proton acceptor is the Tyr147. NAD(+) contacts are provided by residues Lys151 and Val180–Ser184. Substrate contacts are provided by Arg188 and Arg205.

The protein belongs to the short-chain dehydrogenases/reductases (SDR) family. Homotetramer.

It is found in the cytoplasm. The catalysed reaction is cis-4-hydroxy-L-proline + NAD(+) = 4-oxo-L-proline + NADH + H(+). It carries out the reaction (R)-3-hydroxybutanoate + NAD(+) = acetoacetate + NADH + H(+). It participates in amino-acid metabolism. The protein operates within siderophore biosynthesis. NAD(H)-dependent dehydrogenase/reductase with a preference for cyclic substrates. Catalyzes stereoselective conversion of 4-oxo-L-proline to cis-4-hydroxy-L-proline, likely a detoxification mechanism for ketoprolines. Mediates the formation of 2,5-dihydroxybenzoate (2,5-DHBA), a siderophore that chelates free cytoplasmic iron, thereby regulating iron transport and homeostasis while protecting cells against free radical-induced oxidative stress. The iron-siderophore complex is imported into mitochondria, providing an iron source for mitochondrial metabolic processes in particular heme synthesis. May act as a 3-hydroxybutyrate dehydrogenase. The protein is Dehydrogenase/reductase SDR family member 6 (bdh2) of Danio rerio (Zebrafish).